We begin with the raw amino-acid sequence, 390 residues long: Serine/threonine/tyrosine-protein kinase HT1 (390 aa).

The region spanning 86–359 (LFIGNKFASG…GLPLTSHASL (274 aa)) is the Protein kinase domain. ATP-binding positions include 92 to 100 (FASGAHSRI) and Lys113. The active-site Proton acceptor is the Asp212.

It belongs to the protein kinase superfamily. Ser/Thr protein kinase family. Interacts with DTX56. Binds to MPK4 and MPK12. Associates to CBC1 and CBC2. In terms of processing, autophosphorylated. As to expression, mainly localizes in guard cells. Expressed at low level in leaves, stems, roots and flowers.

The protein localises to the cell membrane. The catalysed reaction is L-seryl-[protein] + ATP = O-phospho-L-seryl-[protein] + ADP + H(+). It catalyses the reaction L-threonyl-[protein] + ATP = O-phospho-L-threonyl-[protein] + ADP + H(+). The enzyme catalyses L-tyrosyl-[protein] + ATP = O-phospho-L-tyrosyl-[protein] + ADP + H(+). With respect to regulation, inhibited by MPK4 and MPK12. Its function is as follows. Serine/threonine/tyrosine kinase involved in the control of stomatal movement in response to CO(2). Functions as a major negative regulator of CO(2)-induced stomatal closing. Does not seem to be involved in stomatal closure in response to abscisic acid (ABA) or light. Involved in the control of red light-induced stomatal opening. Is epistatic to SRK2E/OST1 function during stomatal responses to red light and altered CO(2). Phosphorylates SRK2E/OST1 and GHR1 to prevents SRK2E/OST1- and GHR1-induced activation of SLAC1, thus preventing stomatal closure. Mediates the phosphorylation of CBC1 and CBC2. This is Serine/threonine/tyrosine-protein kinase HT1 from Arabidopsis thaliana (Mouse-ear cress).